The chain runs to 396 residues: Phosphoglycerate kinase (396 aa).

Residues 21–23, Arg-37, 60–63, Arg-121, and Arg-154 each bind substrate; these read DFN and HLGR. Residues Lys-205, Gly-296, Glu-327, and 353-356 each bind ATP; that span reads GGDS.

The protein belongs to the phosphoglycerate kinase family. Monomer.

It localises to the cytoplasm. The catalysed reaction is (2R)-3-phosphoglycerate + ATP = (2R)-3-phospho-glyceroyl phosphate + ADP. It participates in carbohydrate degradation; glycolysis; pyruvate from D-glyceraldehyde 3-phosphate: step 2/5. The protein is Phosphoglycerate kinase of Anaeromyxobacter sp. (strain K).